The following is a 573-amino-acid chain: Sulfite reductase [NADPH] hemoprotein beta-component (573 aa).

[4Fe-4S] cluster contacts are provided by Cys-436, Cys-442, Cys-481, and Cys-485. Residue Cys-485 participates in siroheme binding.

The protein belongs to the nitrite and sulfite reductase 4Fe-4S domain family. Alpha(8)-beta(8). The alpha component is a flavoprotein, the beta component is a hemoprotein. Siroheme serves as cofactor. The cofactor is [4Fe-4S] cluster.

The enzyme catalyses hydrogen sulfide + 3 NADP(+) + 3 H2O = sulfite + 3 NADPH + 4 H(+). It participates in sulfur metabolism; hydrogen sulfide biosynthesis; hydrogen sulfide from sulfite (NADPH route): step 1/1. In terms of biological role, component of the sulfite reductase complex that catalyzes the 6-electron reduction of sulfite to sulfide. This is one of several activities required for the biosynthesis of L-cysteine from sulfate. The chain is Sulfite reductase [NADPH] hemoprotein beta-component from Alteromonas mediterranea (strain DSM 17117 / CIP 110805 / LMG 28347 / Deep ecotype).